Here is a 172-residue protein sequence, read N- to C-terminus: Centrin-2 (172 aa).

The span at Met1–Ala14 shows a compositional bias: polar residues. A disordered region spans residues Met1 to Gln31. Ala2 bears the N-acetylalanine mark. The required for self-assembly stretch occupies residues Ala2–Leu25. Ser20 bears the Phosphoserine mark. Lys22 is covalently cross-linked (Glycyl lysine isopeptide (Lys-Gly) (interchain with G-Cter in SUMO2)). Residue Thr26 is modified to Phosphothreonine. EF-hand domains lie at Asp28–Glu63, Pro64–Glu99, Asp101–Asn136, and Leu137–Tyr172. Asp41, Asp43, Thr45, Thr47, and Glu52 together coordinate Ca(2+). Residues Asp150, Asp152, Asp154, Glu156, and Glu161 each coordinate Ca(2+).

This sequence belongs to the centrin family. As to quaternary structure, monomer. Homooligomer. Interacts with CCP110, SFI1. Component of the XPC complex composed of XPC, RAD23B and CETN2. Component of the nuclear pore complex (NPC)-associated TREX-2 complex (transcription and export complex 2), composed of at least GANP, 2 copies of ENY2, PCID2, SEM1/DSS1, and either centrin CETN2 or centrin CETN3. The TREX-2 complex also associates with ALYREF/ALY and with the nucleoporin NUP153. Interacts with USP49. Forms a microtubule-associated complex with POC5, POC1B and FAM161A. Interacts with CCDC15. Ubiquitously expressed in all adult tissues tested, with strongest expression in brain, spleen, kidney, small intestine and ovary. Also expressed in the NIH 3T3 fibroblast cell line and peripheral blood lymphocytes.

Its subcellular location is the cytoplasm. The protein resides in the cytoskeleton. It is found in the microtubule organizing center. The protein localises to the centrosome. It localises to the centriole. Its subcellular location is the nucleus. The protein resides in the nucleus envelope. It is found in the nuclear pore complex. Plays a fundamental role in microtubule organizing center structure and function. Required for centriole duplication and correct spindle formation. Has a role in regulating cytokinesis and genome stability via cooperation with CALM1 and CCP110. Functionally, involved in global genome nucleotide excision repair (GG-NER) by acting as component of the XPC complex. Cooperatively with Rad23b appears to stabilize Xpc. In vitro, stimulates DNA binding of the Xpc:Rad23b dimer. Its function is as follows. The XPC complex is proposed to represent the first factor bound at the sites of DNA damage and together with other core recognition factors, Xpa, RPA and the TFIIH complex, is part of the pre-incision (or initial recognition) complex. The XPC complex recognizes a wide spectrum of damaged DNA characterized by distortions of the DNA helix such as single-stranded loops, mismatched bubbles or single-stranded overhangs. The orientation of XPC complex binding appears to be crucial for inducing a productive NER. XPC complex is proposed to recognize and to interact with unpaired bases on the undamaged DNA strand which is followed by recruitment of the TFIIH complex and subsequent scanning for lesions in the opposite strand in a 5'-to-3' direction by the NER machinery. Cyclobutane pyrimidine dimers (CPDs) which are formed upon UV-induced DNA damage esacpe detection by the XPC complex due to a low degree of structural perurbation. Instead they are detected by the UV-DDB complex which in turn recruits and cooperates with the XPC complex in the respective DNA repair. In terms of biological role, as a component of the TREX-2 complex, involved in the export of mRNAs to the cytoplasm through the nuclear pores. The chain is Centrin-2 (Cetn2) from Mus musculus (Mouse).